The primary structure comprises 387 residues: ATP-dependent Clp protease proteolytic subunit-related protein 1, chloroplastic (387 aa).

A chloroplast-targeting transit peptide spans 1 to 41 (MATALVSPLTSQLNHEAVCSKFVLPKSPFMSGSKLFSSNMP). The segment covering 355–365 (QDSSFEKRDYD) has biased composition (basic and acidic residues). The disordered stretch occupies residues 355-387 (QDSSFEKRDYDGTLAQRAMRPGGGSPAAPAGLR).

Belongs to the peptidase S14 family. As to quaternary structure, component of the chloroplastic Clp protease core complex which consist of at least 16 proteins: CLPP4 (3 copies), CLPP5 (3 copies), CLPR4 (2 copies), ClpP1 (1 copy), CLPP6 (1 copy), CLPR2 (1 copy), CLPT1 (1 copy), CLPT2 (1 copy) and 3 copies of CLPP3 and/or CLPR1 and/or CLPR3. The core complex is organized in two heptameric rings, one containing CLPP3,4,5,6 in a 1:2:3:1 ratio and the other CLPP1 and CLPR1,2,3,4 in a 3:1:1:1:1 ratio.

Its subcellular location is the plastid. The protein resides in the chloroplast stroma. Its function is as follows. Required for chloroplast development and differentiation. In Arabidopsis thaliana (Mouse-ear cress), this protein is ATP-dependent Clp protease proteolytic subunit-related protein 1, chloroplastic.